Consider the following 34-residue polypeptide: Cytochrome c oxidase polypeptide 2A (34 aa).

At methionine 1 the chain carries N-formylmethionine. A helical transmembrane segment spans residues 4–34 (KPKGALAVILVLTLTILVFWLGVYAVFFARG).

Its subcellular location is the cell membrane. The catalysed reaction is 4 Fe(II)-[cytochrome c] + O2 + 8 H(+)(in) = 4 Fe(III)-[cytochrome c] + 2 H2O + 4 H(+)(out). This Thermus thermophilus (strain ATCC 27634 / DSM 579 / HB8) protein is Cytochrome c oxidase polypeptide 2A (cbaD).